The sequence spans 437 residues: GTPase Obg (437 aa).

Residues 2-160 (SMFLDTAKIS…RQLELELKIL (159 aa)) form the Obg domain. The region spanning 161-338 (ADVGLVGFPS…LLEATAELLA (178 aa)) is the OBG-type G domain. Residues 167 to 174 (GFPSVGKS), 192 to 196 (FTTIV), 214 to 217 (DLPG), 284 to 287 (NKMD), and 319 to 321 (SSL) each bind GTP. Mg(2+) contacts are provided by Ser-174 and Thr-194. Residues 359–437 (GFAEAEKEFE…IGKFEFEFVD (79 aa)) form the OCT domain.

This sequence belongs to the TRAFAC class OBG-HflX-like GTPase superfamily. OBG GTPase family. Monomer. It depends on Mg(2+) as a cofactor.

It is found in the cytoplasm. Functionally, an essential GTPase which binds GTP, GDP and possibly (p)ppGpp with moderate affinity, with high nucleotide exchange rates and a fairly low GTP hydrolysis rate. Plays a role in control of the cell cycle, stress response, ribosome biogenesis and in those bacteria that undergo differentiation, in morphogenesis control. The protein is GTPase Obg of Streptococcus pyogenes serotype M3 (strain ATCC BAA-595 / MGAS315).